The primary structure comprises 73 residues: Translation initiation factor IF-1 (73 aa).

The region spanning 1-73 is the S1-like domain; sequence MAKKDGAIEV…SRGRIVYRYK (73 aa).

The protein belongs to the IF-1 family. As to quaternary structure, component of the 30S ribosomal translation pre-initiation complex which assembles on the 30S ribosome in the order IF-2 and IF-3, IF-1 and N-formylmethionyl-tRNA(fMet); mRNA recruitment can occur at any time during PIC assembly.

Its subcellular location is the cytoplasm. Functionally, one of the essential components for the initiation of protein synthesis. Stabilizes the binding of IF-2 and IF-3 on the 30S subunit to which N-formylmethionyl-tRNA(fMet) subsequently binds. Helps modulate mRNA selection, yielding the 30S pre-initiation complex (PIC). Upon addition of the 50S ribosomal subunit IF-1, IF-2 and IF-3 are released leaving the mature 70S translation initiation complex. The protein is Translation initiation factor IF-1 of Mycolicibacterium smegmatis (strain ATCC 700084 / mc(2)155) (Mycobacterium smegmatis).